The sequence spans 251 residues: PF03932 family protein CutC (251 aa).

It belongs to the CutC family.

Its subcellular location is the cytoplasm. The sequence is that of PF03932 family protein CutC from Erwinia tasmaniensis (strain DSM 17950 / CFBP 7177 / CIP 109463 / NCPPB 4357 / Et1/99).